Consider the following 261-residue polypeptide: Tryptophan synthase alpha chain (261 aa).

Catalysis depends on proton acceptor residues glutamate 49 and aspartate 60.

The protein belongs to the TrpA family. In terms of assembly, tetramer of two alpha and two beta chains.

The enzyme catalyses (1S,2R)-1-C-(indol-3-yl)glycerol 3-phosphate + L-serine = D-glyceraldehyde 3-phosphate + L-tryptophan + H2O. It functions in the pathway amino-acid biosynthesis; L-tryptophan biosynthesis; L-tryptophan from chorismate: step 5/5. Its function is as follows. The alpha subunit is responsible for the aldol cleavage of indoleglycerol phosphate to indole and glyceraldehyde 3-phosphate. This chain is Tryptophan synthase alpha chain, found in Roseiflexus sp. (strain RS-1).